We begin with the raw amino-acid sequence, 333 residues long: Transaldolase (333 aa).

Residue K136 is the Schiff-base intermediate with substrate of the active site.

It belongs to the transaldolase family. Type 1 subfamily. Homodimer.

It localises to the cytoplasm. The catalysed reaction is D-sedoheptulose 7-phosphate + D-glyceraldehyde 3-phosphate = D-erythrose 4-phosphate + beta-D-fructose 6-phosphate. It participates in carbohydrate degradation; pentose phosphate pathway; D-glyceraldehyde 3-phosphate and beta-D-fructose 6-phosphate from D-ribose 5-phosphate and D-xylulose 5-phosphate (non-oxidative stage): step 2/3. Its function is as follows. Transaldolase is important for the balance of metabolites in the pentose-phosphate pathway. The sequence is that of Transaldolase from Acidobacterium capsulatum (strain ATCC 51196 / DSM 11244 / BCRC 80197 / JCM 7670 / NBRC 15755 / NCIMB 13165 / 161).